The chain runs to 225 residues: MALSMYHYIAREWKKPYEGLHGELMKARLLEWRRQPSILRVEKPTRLDRARALGYKAKQGVIVARVRVRKGGRRKPRPNKGRRPKRMGVYGFAPAKSLRLIAEERAQRKYPNLVVLNSYYVGEDGRYKWYEVILVDPNHPAIKNDPELNWVTTGKHKGRPFRGLTSAGKKMRGLRKSRGLKGTHKYKWKKKAKERILRKRHEASRGARLIEPDEIREKFHKGDLT.

Residues 159 to 180 (RPFRGLTSAGKKMRGLRKSRGL) are disordered. The segment covering 169–180 (KKMRGLRKSRGL) has biased composition (basic residues).

It belongs to the eukaryotic ribosomal protein eL15 family.

The protein is Large ribosomal subunit protein eL15 (rpl15e) of Aeropyrum pernix (strain ATCC 700893 / DSM 11879 / JCM 9820 / NBRC 100138 / K1).